Here is a 429-residue protein sequence, read N- to C-terminus: Adenylosuccinate synthetase (429 aa).

GTP is bound by residues 12–18 (GDEGKGK) and 40–42 (GHT). Aspartate 13 functions as the Proton acceptor in the catalytic mechanism. Aspartate 13 and glycine 40 together coordinate Mg(2+). Residues 13-16 (DEGK), 38-41 (NAGH), threonine 128, arginine 142, glutamine 223, threonine 238, and arginine 302 each bind IMP. The Proton donor role is filled by histidine 41. 298–304 (TVTGRPR) is a substrate binding site. GTP-binding positions include arginine 304, 330–332 (LLD), and 412–414 (SVG).

It belongs to the adenylosuccinate synthetase family. As to quaternary structure, homodimer. Requires Mg(2+) as cofactor.

Its subcellular location is the cytoplasm. The enzyme catalyses IMP + L-aspartate + GTP = N(6)-(1,2-dicarboxyethyl)-AMP + GDP + phosphate + 2 H(+). The protein operates within purine metabolism; AMP biosynthesis via de novo pathway; AMP from IMP: step 1/2. Functionally, plays an important role in the de novo pathway of purine nucleotide biosynthesis. Catalyzes the first committed step in the biosynthesis of AMP from IMP. The polypeptide is Adenylosuccinate synthetase (Lactobacillus gasseri (strain ATCC 33323 / DSM 20243 / BCRC 14619 / CIP 102991 / JCM 1131 / KCTC 3163 / NCIMB 11718 / NCTC 13722 / AM63)).